The primary structure comprises 166 residues: Lipoprotein signal peptidase (166 aa).

4 helical membrane passes run 9-29 (ASGA…FDQL), 45-65 (ALTS…FGFL), 71-91 (WQRW…CFLL), and 100-120 (FSLS…DRLV). Catalysis depends on residues aspartate 126 and aspartate 144. A helical membrane pass occupies residues 135–155 (WHFPAFNLADSAITIGAVLLI).

It belongs to the peptidase A8 family.

The protein localises to the cell inner membrane. It catalyses the reaction Release of signal peptides from bacterial membrane prolipoproteins. Hydrolyzes -Xaa-Yaa-Zaa-|-(S,diacylglyceryl)Cys-, in which Xaa is hydrophobic (preferably Leu), and Yaa (Ala or Ser) and Zaa (Gly or Ala) have small, neutral side chains.. It participates in protein modification; lipoprotein biosynthesis (signal peptide cleavage). Its function is as follows. This protein specifically catalyzes the removal of signal peptides from prolipoproteins. This Burkholderia multivorans (strain ATCC 17616 / 249) protein is Lipoprotein signal peptidase.